The primary structure comprises 377 residues: Chaperone protein DnaJ 1 (377 aa).

The J domain maps to 4–68 (DYYQTLGVTR…EIRQRYDQFG (65 aa)). The segment at 136 to 218 (GGEKEIRIPH…CNGVGRKQET (83 aa)) adopts a CR-type zinc-finger fold. Zn(2+) is bound by residues Cys-149, Cys-152, Cys-166, Cys-169, Cys-192, Cys-195, Cys-206, and Cys-209. CXXCXGXG motif repeat units lie at residues 149 to 156 (CQVCEGTG), 166 to 173 (CGTCNGAG), 192 to 199 (CPTCNGSG), and 206 to 213 (CEACNGVG).

This sequence belongs to the DnaJ family. In terms of assembly, homodimer. Zn(2+) is required as a cofactor.

Its subcellular location is the cytoplasm. Its function is as follows. Participates actively in the response to hyperosmotic and heat shock by preventing the aggregation of stress-denatured proteins and by disaggregating proteins, also in an autonomous, DnaK-independent fashion. Unfolded proteins bind initially to DnaJ; upon interaction with the DnaJ-bound protein, DnaK hydrolyzes its bound ATP, resulting in the formation of a stable complex. GrpE releases ADP from DnaK; ATP binding to DnaK triggers the release of the substrate protein, thus completing the reaction cycle. Several rounds of ATP-dependent interactions between DnaJ, DnaK and GrpE are required for fully efficient folding. Also involved, together with DnaK and GrpE, in the DNA replication of plasmids through activation of initiation proteins. The sequence is that of Chaperone protein DnaJ 1 from Synechocystis sp. (strain ATCC 27184 / PCC 6803 / Kazusa).